The primary structure comprises 470 residues: Putative multidrug resistance protein MdtD (470 aa).

Over 1–11 (MTELPDNTRWQ) the chain is Periplasmic. Residues 12–32 (LWIVAFGFFMQSLDTTIVNTA) traverse the membrane as a helical segment. The Cytoplasmic segment spans residues 33–48 (LPSMAKSLGESPLHMH). A helical membrane pass occupies residues 49–69 (MVVVSYVLTVAVMLPASGWLA). Residues 70 to 76 (DKIGVRN) are Periplasmic-facing. The chain crosses the membrane as a helical span at residues 77 to 97 (IFFAAIVLFTLGSLFCALSGT). The Cytoplasmic portion of the chain corresponds to 98–101 (LNQL). Residues 102–124 (VLARVLQGVGGAMMVPVGRLTVM) form a helical membrane-spanning segment. Topologically, residues 125–137 (KIVPRTQYMAAMT) are periplasmic. Residues 138–158 (FVTLPGQIGPLLGPALGGVLV) traverse the membrane as a helical segment. Over 159–164 (EYASWH) the chain is Cytoplasmic. Residues 165–185 (WIFLINIPVGIVGAMATFMLM) traverse the membrane as a helical segment. The Periplasmic portion of the chain corresponds to 186–196 (PNYTIETRRFD). A helical transmembrane segment spans residues 197–217 (LPGFLLLAIGMAVLTLALDGS). Topologically, residues 218–224 (KSMGISP) are cytoplasmic. The chain crosses the membrane as a helical span at residues 225–245 (WTLAGLAAGGAAAILLYLFHA). Residues 246-262 (KKNSGALFSLRLFRTPT) lie on the Periplasmic side of the membrane. The helical transmembrane segment at 263 to 283 (FSLGLLGSFAGRIGSGMLPFM) threads the bilayer. Residues 284 to 285 (TP) are Cytoplasmic-facing. Residues 286–306 (VFLQIGLGFSPFHAGLMMIPM) traverse the membrane as a helical segment. Residues 307–341 (VLGSMGMKRIVVQIVNRFGYRRVLVATTLGLALVS) lie on the Periplasmic side of the membrane. The helical transmembrane segment at 342-362 (LLFMSVALLGWYYLLPLVLLL) threads the bilayer. Residues 363-395 (QGMVNSARFSSMNTLTLKDLPDTLASSGNSLLS) are Cytoplasmic-facing. The chain crosses the membrane as a helical span at residues 396–416 (MIMQLSMSIGVTIAGMLLGMF). Residues 417-430 (GQQHIGIDSSATHH) are Periplasmic-facing. Residues 431–451 (VFMYTWLCMAVIIALPAIIFA) form a helical membrane-spanning segment. Over 452–470 (RVPNDTQQNMVISRRKRSL) the chain is Cytoplasmic.

Belongs to the major facilitator superfamily. TCR/Tet family.

The protein localises to the cell inner membrane. The chain is Putative multidrug resistance protein MdtD from Salmonella dublin (strain CT_02021853).